A 482-amino-acid polypeptide reads, in one-letter code: tRNA sulfurtransferase (482 aa).

A THUMP domain is found at 61–165 (LAIRDALTRI…DDRLLLIKGR (105 aa)). ATP contacts are provided by residues 183-184 (LI), Lys265, Gly287, and Gln296. A disulfide bond links Cys344 and Cys456. Residues 404-482 (FGPNDVILDI…GFQNVKVYRP (79 aa)) enclose the Rhodanese domain. Cys456 serves as the catalytic Cysteine persulfide intermediate.

This sequence belongs to the ThiI family.

It localises to the cytoplasm. It catalyses the reaction [ThiI sulfur-carrier protein]-S-sulfanyl-L-cysteine + a uridine in tRNA + 2 reduced [2Fe-2S]-[ferredoxin] + ATP + H(+) = [ThiI sulfur-carrier protein]-L-cysteine + a 4-thiouridine in tRNA + 2 oxidized [2Fe-2S]-[ferredoxin] + AMP + diphosphate. The enzyme catalyses [ThiS sulfur-carrier protein]-C-terminal Gly-Gly-AMP + S-sulfanyl-L-cysteinyl-[cysteine desulfurase] + AH2 = [ThiS sulfur-carrier protein]-C-terminal-Gly-aminoethanethioate + L-cysteinyl-[cysteine desulfurase] + A + AMP + 2 H(+). Its pathway is cofactor biosynthesis; thiamine diphosphate biosynthesis. Its function is as follows. Catalyzes the ATP-dependent transfer of a sulfur to tRNA to produce 4-thiouridine in position 8 of tRNAs, which functions as a near-UV photosensor. Also catalyzes the transfer of sulfur to the sulfur carrier protein ThiS, forming ThiS-thiocarboxylate. This is a step in the synthesis of thiazole, in the thiamine biosynthesis pathway. The sulfur is donated as persulfide by IscS. This Citrobacter koseri (strain ATCC BAA-895 / CDC 4225-83 / SGSC4696) protein is tRNA sulfurtransferase.